The following is a 553-amino-acid chain: Phosphoglucomutase (553 aa).

Positions 1 to 24 (MQATVKRYPTTPISGQTMGTSGLR) are disordered. Over residues 11-20 (TPISGQTMGT) the composition is skewed to polar residues. Substrate contacts are provided by residues Thr-20, Arg-24, 117 to 118 (SH), and Lys-131. Residue Ser-117 is the Phosphoserine intermediate of the active site. Ser-117 contacts Mg(2+). Mg(2+) contacts are provided by Asp-289, Asp-291, and Asp-293. Substrate is bound by residues 293–294 (DR), Thr-352, 371–373 (EES), Lys-384, and Arg-509.

This sequence belongs to the phosphohexose mutase family. Mg(2+) serves as cofactor.

It localises to the cytoplasm. It carries out the reaction alpha-D-glucose 1-phosphate = alpha-D-glucose 6-phosphate. Its function is as follows. This enzyme participates in both the breakdown and synthesis of glucose. The chain is Phosphoglucomutase (pgm) from Entamoeba dispar.